A 685-amino-acid chain; its full sequence is Putative mannosyltransferase YycA (685 aa).

Helical transmembrane passes span 6–26 (FDAA…YHIW), 68–88 (VLWI…SVII), 109–129 (FGVG…IAVA), 154–174 (AVKQ…GLAF), 176–196 (MKMM…LIAS), and 204–224 (IGSL…WAIA). The disordered stretch occupies residues 269-347 (MNAAGGGNMQ…GGGGGKSVNM (79 aa)). Positions 277-286 (MQNQDNMQAP) are enriched in polar residues. The span at 287 to 303 (NGNGSSFSQNGNQSFGN) shows a compositional bias: low complexity. Gly residues predominate over residues 318 to 343 (LNGGGGTPPTGGNGPGNGGPGGGGGK). Transmembrane regions (helical) follow at residues 363–383 (LSGQ…GAII), 399–419 (TLFW…AGFF), 422–442 (YYLI…WYTM), 455–475 (YLLP…LSAY), 479–499 (IGSV…LALL), 513–533 (IISL…PLLY), and 573–593 (TGEE…YIIY). A disordered region spans residues 652-685 (TSDEYSGSSSSTNSVQGMRRGPGGESQQTLYLVE). Over residues 654–665 (DEYSGSSSSTNS) the composition is skewed to low complexity. Residues 676 to 685 (ESQQTLYLVE) are compositionally biased toward polar residues.

Belongs to the glycosyltransferase 39 family.

It is found in the cell membrane. The polypeptide is Putative mannosyltransferase YycA (yycA) (Bacillus subtilis (strain 168)).